We begin with the raw amino-acid sequence, 350 residues long: Histidinol-phosphate aminotransferase (350 aa).

N6-(pyridoxal phosphate)lysine is present on K209.

It belongs to the class-II pyridoxal-phosphate-dependent aminotransferase family. Histidinol-phosphate aminotransferase subfamily. Homodimer. It depends on pyridoxal 5'-phosphate as a cofactor.

The enzyme catalyses L-histidinol phosphate + 2-oxoglutarate = 3-(imidazol-4-yl)-2-oxopropyl phosphate + L-glutamate. It participates in amino-acid biosynthesis; L-histidine biosynthesis; L-histidine from 5-phospho-alpha-D-ribose 1-diphosphate: step 7/9. In Christiangramia forsetii (strain DSM 17595 / CGMCC 1.15422 / KT0803) (Gramella forsetii), this protein is Histidinol-phosphate aminotransferase.